Here is a 101-residue protein sequence, read N- to C-terminus: Chaperone modulatory protein CbpM (101 aa).

The protein belongs to the CbpM family.

Interacts with CbpA and inhibits both the DnaJ-like co-chaperone activity and the DNA binding activity of CbpA. Together with CbpA, modulates the activity of the DnaK chaperone system. Does not inhibit the co-chaperone activity of DnaJ. This chain is Chaperone modulatory protein CbpM, found in Escherichia coli O1:K1 / APEC.